A 155-amino-acid polypeptide reads, in one-letter code: Cytochrome c-550 (155 aa).

A signal peptide spans 1-20; the sequence is MKISIYATLAAITLALPAAA. A Pyrrolidone carboxylic acid modification is found at Q21. The heme c site is built by C35, C38, H39, and M120. The propeptide occupies 150 to 155; that stretch reads AEGESN.

Binds 1 heme c group covalently per subunit.

This is Cytochrome c-550 (cycA) from Paracoccus denitrificans.